A 211-amino-acid polypeptide reads, in one-letter code: Probable GTP-binding protein EngB (211 aa).

Residues 26-200 (SGIEVAFAGR…RQKLDNWFST (175 aa)) enclose the EngB-type G domain. GTP-binding positions include 34–41 (GRSNAGKS), 61–65 (GRTQL), 79–82 (DLPG), 146–149 (TKAD), and 179–181 (FSS). Residues Ser-41 and Thr-63 each coordinate Mg(2+).

Belongs to the TRAFAC class TrmE-Era-EngA-EngB-Septin-like GTPase superfamily. EngB GTPase family. The cofactor is Mg(2+).

Necessary for normal cell division and for the maintenance of normal septation. This is Probable GTP-binding protein EngB from Pectobacterium carotovorum subsp. carotovorum (strain PC1).